Reading from the N-terminus, the 117-residue chain is Non-specific lipid-transfer protein 2 (117 aa).

The signal sequence occupies residues Met-1–Ala-25. Disulfide bonds link Cys-29–Cys-76, Cys-39–Cys-53, Cys-54–Cys-99, and Cys-74–Cys-113.

Belongs to the plant LTP family.

Its function is as follows. Plant non-specific lipid-transfer proteins transfer phospholipids as well as galactolipids across membranes. May play a role in wax or cutin deposition in the cell walls of expanding epidermal cells and certain secretory tissues. The polypeptide is Non-specific lipid-transfer protein 2 (LTP2) (Brassica napus (Rape)).